We begin with the raw amino-acid sequence, 181 residues long: Ribonuclease HII (181 aa).

An RNase H type-2 domain is found at methionine 1–isoleucine 181. 3 residues coordinate a divalent metal cation: aspartate 6, glutamate 7, and aspartate 98.

It belongs to the RNase HII family. The cofactor is Mn(2+). Mg(2+) is required as a cofactor.

It localises to the cytoplasm. The enzyme catalyses Endonucleolytic cleavage to 5'-phosphomonoester.. In terms of biological role, endonuclease that specifically degrades the RNA of RNA-DNA hybrids. The polypeptide is Ribonuclease HII (Borreliella afzelii (strain PKo) (Borrelia afzelii)).